Reading from the N-terminus, the 78-residue chain is Structural DNA-binding protein p10 (78 aa).

A compositionally biased stretch (low complexity) spans 1 to 27 (MPTKAGTKSTANKKTTKGSSKSGSSRG). The segment at 1-41 (MPTKAGTKSTANKKTTKGSSKSGSSRGHTGKTHASSSMHSG) is disordered.

The protein belongs to the asfivirus P10 family.

It is found in the virion. Functionally, may play a role in genome packaging through direct interaction with viral DNA. Binds to ssDNA and dsDNA with the same apparent affinity in vitro. This is Structural DNA-binding protein p10 from African swine fever virus (strain Badajoz 1971 Vero-adapted) (Ba71V).